The following is a 117-amino-acid chain: MQRCAGFLFLSLILCAALSETFGLVLSAKEKRGWTLNSAGYLLGPHAVDNHRSFNDKHGFTGKREIQPEEDIKAGNIGRPLADENIVRTVVEFLTYLHLKEAGALDNLPSPEETNES.

Residues 1–19 form the signal peptide; the sequence is MQRCAGFLFLSLILCAALS. A propeptide spanning residues 20-30 is cleaved from the precursor; it reads ETFGLVLSAKE. Threonine amide is present on Thr-61.

This sequence belongs to the galanin family.

The protein localises to the secreted. Endocrine hormone of the central and peripheral nervous systems that binds and activates the G protein-coupled receptors GALR1, GALR2, and GALR3. This small neuropeptide may regulate diverse physiologic functions including contraction of smooth muscle of the gastrointestinal and genitourinary tract, growth hormone and insulin release and adrenal secretion. The protein is Galanin peptides (GAL) of Coturnix japonica (Japanese quail).